A 157-amino-acid polypeptide reads, in one-letter code: Transcription elongation factor GreA (157 aa).

Residues 17 to 37 adopt a coiled-coil conformation; sequence ELERLLKLRPQISEAIAEARE.

The protein belongs to the GreA/GreB family.

Necessary for efficient RNA polymerase transcription elongation past template-encoded arresting sites. The arresting sites in DNA have the property of trapping a certain fraction of elongating RNA polymerases that pass through, resulting in locked ternary complexes. Cleavage of the nascent transcript by cleavage factors such as GreA or GreB allows the resumption of elongation from the new 3'terminus. GreA releases sequences of 2 to 3 nucleotides. In Vibrio parahaemolyticus serotype O3:K6 (strain RIMD 2210633), this protein is Transcription elongation factor GreA.